Consider the following 704-residue polypeptide: Elongation factor G (704 aa).

Residues 10-290 (NKVRNIGIMA…AVVDFLPSPL (281 aa)) form the tr-type G domain. GTP contacts are provided by residues 19 to 26 (AHIDAGKT), 83 to 87 (DTPGH), and 137 to 140 (NKMD). Residues 293-313 (PPMIGHDPRNEETEMTRKPST) are disordered. Positions 298 to 313 (HDPRNEETEMTRKPST) are enriched in basic and acidic residues.

It belongs to the TRAFAC class translation factor GTPase superfamily. Classic translation factor GTPase family. EF-G/EF-2 subfamily.

Its subcellular location is the cytoplasm. In terms of biological role, catalyzes the GTP-dependent ribosomal translocation step during translation elongation. During this step, the ribosome changes from the pre-translocational (PRE) to the post-translocational (POST) state as the newly formed A-site-bound peptidyl-tRNA and P-site-bound deacylated tRNA move to the P and E sites, respectively. Catalyzes the coordinated movement of the two tRNA molecules, the mRNA and conformational changes in the ribosome. This Renibacterium salmoninarum (strain ATCC 33209 / DSM 20767 / JCM 11484 / NBRC 15589 / NCIMB 2235) protein is Elongation factor G.